Reading from the N-terminus, the 785-residue chain is Ribosome biogenesis protein BOP1 homolog (785 aa).

Residues 1–11 (MTKKLTIKRKV) show a composition bias toward basic residues. The interval 1–160 (MTKKLTIKRK…DSDTSDEEDI (160 aa)) is disordered. Composition is skewed to acidic residues over residues 45–54 (EDSTDDEGID), 61–73 (SSED…DEEG), and 85–102 (SGDD…EDDA). Over residues 103–112 (DAKKSSKNND) the composition is skewed to basic and acidic residues. Over residues 150 to 159 (ADSDTSDEED) the composition is skewed to acidic residues. 7 WD repeats span residues 446–487 (GHTD…RTIE), 489–527 (EDVV…KLLV), 571–613 (THFK…SQIP), 616–654 (KSKG…LIKK), 657–696 (TNSK…KPYQ), 700–739 (LHRN…DLLQ), and 755–785 (REEF…RLFT).

Belongs to the WD repeat BOP1/ERB1 family.

The protein resides in the nucleus. It localises to the nucleolus. It is found in the nucleoplasm. Functionally, required for maturation of ribosomal RNAs and formation of the large ribosomal subunit. The sequence is that of Ribosome biogenesis protein BOP1 homolog from Drosophila persimilis (Fruit fly).